The following is a 183-amino-acid chain: DELTA-miturgitoxin-Cp1b (183 aa).

The signal sequence occupies residues 1–20; sequence MKFSLFFSVFFLAVLHACLS. Residues 21 to 47 constitute a propeptide that is removed on maturation; that stretch reads ESEIDLEDEEHFMSSDSFLSEIQDESR. A Processing quadruplet motif motif is present at residues 44–47; the sequence is DESR. Intrachain disulfides connect cysteine 51/cysteine 66, cysteine 58/cysteine 75, cysteine 65/cysteine 88, cysteine 77/cysteine 86, cysteine 115/cysteine 130, cysteine 122/cysteine 139, cysteine 129/cysteine 157, and cysteine 141/cysteine 155. The interval 164–177 is predicted alpha-helix; the sequence is QAIEGALRIAKKLI. Tryptophan 181 carries the tryptophan amide modification.

Belongs to the neurotoxin 19 (CSTX) family. Double-CSTX subfamily. Post-translationally, cleavage of the propeptide depends on the processing quadruplet motif (XXXR, with at least one of X being E). In terms of tissue distribution, expressed by the venom gland.

The protein localises to the secreted. It is found in the target cell membrane. Functionally, spider venom toxin that exhibits cytolytic activity by forming an alpha-helix across the membrane. Lethal to insect larvae. Causes instant paralysis and death in the larvae of the flesh fly (S.carnaria) at doses of 20 ug/g, at doses of less than 10 ug/g causes reversible paralysis. Has cytolytic activity against insect Sf9 cells. Causes stable and irreversible depolarization of fly muscle fibers, leading to contracture at higher toxin concentrations. Destabilizes membranes. The polypeptide is DELTA-miturgitoxin-Cp1b (Cheiracanthium punctorium (Yellow sac spider)).